Consider the following 190-residue polypeptide: Protein GrpE (190 aa).

Residues 1–41 form a disordered region; it reads MAKEKQEEQQKQTAPENEKAPKKDIKKEASDKKGDQTSKLK.

This sequence belongs to the GrpE family. In terms of assembly, homodimer.

It localises to the cytoplasm. Functionally, participates actively in the response to hyperosmotic and heat shock by preventing the aggregation of stress-denatured proteins, in association with DnaK and GrpE. It is the nucleotide exchange factor for DnaK and may function as a thermosensor. Unfolded proteins bind initially to DnaJ; upon interaction with the DnaJ-bound protein, DnaK hydrolyzes its bound ATP, resulting in the formation of a stable complex. GrpE releases ADP from DnaK; ATP binding to DnaK triggers the release of the substrate protein, thus completing the reaction cycle. Several rounds of ATP-dependent interactions between DnaJ, DnaK and GrpE are required for fully efficient folding. The polypeptide is Protein GrpE (Limosilactobacillus reuteri (strain DSM 20016) (Lactobacillus reuteri)).